We begin with the raw amino-acid sequence, 28 residues long: Potassium channel toxin alpha-KTx 9.3 (28 aa).

3 disulfides stabilise this stretch: Cys-3–Cys-19, Cys-6–Cys-24, and Cys-10–Cys-26.

Belongs to the short scorpion toxin superfamily. Potassium channel inhibitor family. Alpha-KTx 09 subfamily. In terms of tissue distribution, expressed by the venom gland.

It is found in the secreted. In terms of biological role, inhibits voltage-gated potassium channels. In Aegaeobuthus nigrocinctus (Scorpion), this protein is Potassium channel toxin alpha-KTx 9.3.